The following is a 215-amino-acid chain: 3-demethoxyubiquinol 3-hydroxylase (215 aa).

Positions 64, 94, 97, 146, 178, and 181 each coordinate Fe cation.

This sequence belongs to the COQ7 family. Fe cation serves as cofactor.

It localises to the cell membrane. It carries out the reaction a 5-methoxy-2-methyl-3-(all-trans-polyprenyl)benzene-1,4-diol + AH2 + O2 = a 3-demethylubiquinol + A + H2O. The protein operates within cofactor biosynthesis; ubiquinone biosynthesis. Functionally, catalyzes the hydroxylation of 2-nonaprenyl-3-methyl-6-methoxy-1,4-benzoquinol during ubiquinone biosynthesis. This chain is 3-demethoxyubiquinol 3-hydroxylase, found in Pseudomonas fluorescens (strain Pf0-1).